The chain runs to 637 residues: MSQQETHGFQTEVKQLLQLMIHSLYSNKEIFLRELVSNAADAADKLRYLALTDDTLYEGNGDLRVRVSANKEKGTVTISDNGIGMTRDSVIEHLGTIAKSGTKEFFSNLSGEASKDSQLIGQFGVGFYSAFIVAKKVTVRTRAAGHAANEGVLWESEGEGSFNVESITKNERGTEIVLHLRDEETEFADDYRLRSIITKYSDHISVPVQMWNEGTPESDGPDGEKVAATEGEWKVMNKATALWTRNKSDITEEEYQEFYKHISHDYSDALKWSHNRVEGKQEYTSLLYIPAKAPWDMWNRDHKHGLKLFVQRVFIMDEAEQFLPTYLRFVRGLIDSNDLPLNVSREILQDNQVTTAMRVGITKRVLGMLEKLAKDEPEQYQSFWAEFGQVLKEGPAEDFANKERIAGLLRFASTHDNSAATTVSLEAYIERMKAGQDKIYYIVADSHEAAANSPHLELLRKKGIEVLLLSERIDEWLVNHLTEFKDKKLHSVTRGDLELGELEDAADKEAHDKVAEESKGLIERVKAALADSVSEVRVTSRLTDTPACVVAGEGEMSTQMIKLMQAAGQPVPESKPTFEINPTHPLVEHLNNETDEQLFADWANLLLQQALLSEKGSLADPSAFIKLTNQMLLASVK.

Positions 1–345 (MSQQETHGFQ…SNDLPLNVSR (345 aa)) are a; substrate-binding. The b stretch occupies residues 346–562 (EILQDNQVTT…EGEMSTQMIK (217 aa)). The c stretch occupies residues 563 to 637 (LMQAAGQPVP…TNQMLLASVK (75 aa)).

It belongs to the heat shock protein 90 family. As to quaternary structure, homodimer.

Its subcellular location is the cytoplasm. In terms of biological role, molecular chaperone. Has ATPase activity. The sequence is that of Chaperone protein HtpG from Shewanella frigidimarina (strain NCIMB 400).